Reading from the N-terminus, the 132-residue chain is Holo-[acyl-carrier-protein] synthase (132 aa).

Mg(2+) is bound by residues aspartate 8 and glutamate 62.

Belongs to the P-Pant transferase superfamily. AcpS family. Mg(2+) is required as a cofactor.

It is found in the cytoplasm. It catalyses the reaction apo-[ACP] + CoA = holo-[ACP] + adenosine 3',5'-bisphosphate + H(+). Its function is as follows. Transfers the 4'-phosphopantetheine moiety from coenzyme A to a Ser of acyl-carrier-protein. In Leptothrix cholodnii (strain ATCC 51168 / LMG 8142 / SP-6) (Leptothrix discophora (strain SP-6)), this protein is Holo-[acyl-carrier-protein] synthase.